The chain runs to 303 residues: UDP-N-acetylenolpyruvoylglucosamine reductase (303 aa).

The FAD-binding PCMH-type domain maps to 28–195; sequence KTGGPAQYLA…ISATFGLEPG (168 aa). Residue Arg174 is part of the active site. Ser224 functions as the Proton donor in the catalytic mechanism. Residue Glu294 is part of the active site.

This sequence belongs to the MurB family. FAD is required as a cofactor.

The protein localises to the cytoplasm. The enzyme catalyses UDP-N-acetyl-alpha-D-muramate + NADP(+) = UDP-N-acetyl-3-O-(1-carboxyvinyl)-alpha-D-glucosamine + NADPH + H(+). Its pathway is cell wall biogenesis; peptidoglycan biosynthesis. Cell wall formation. The chain is UDP-N-acetylenolpyruvoylglucosamine reductase from Lactobacillus gasseri (strain ATCC 33323 / DSM 20243 / BCRC 14619 / CIP 102991 / JCM 1131 / KCTC 3163 / NCIMB 11718 / NCTC 13722 / AM63).